A 335-amino-acid chain; its full sequence is NADP(+)-dependent glycerol-3-phosphate dehydrogenase (335 aa).

Gly137 contacts sn-glycerol 3-phosphate. NADPH is bound at residue Ala141. 4 residues coordinate sn-glycerol 3-phosphate: Lys192, Asp250, Arg259, and Asn260. Residue Lys192 is the Proton acceptor of the active site. Residue Arg259 coordinates NADPH. 2 residues coordinate NADPH: Val287 and Glu289.

This sequence belongs to the NAD-dependent glycerol-3-phosphate dehydrogenase family. Homodimer.

The protein resides in the cytoplasm. The enzyme catalyses sn-glycerol 3-phosphate + NADP(+) = dihydroxyacetone phosphate + NADPH + H(+). Catalyzes the reduction of the glycolytic intermediate dihydroxyacetone phosphate (DHAP) to sn-glycerol 3-phosphate (G3P). Shows a 15-fold preference for NADPH over NADH in the reduction process. Can also catalyze the reverse reaction in vitro. Shows no activity with dihydroxyacetone, glycerol, glycerol-2-phosphate, D-glyceraldehyde-3-phosphate, DL-glyceraldehyde, D-erythrose-4-phosphate, D-fructose-6-phosphate, beta-D-glucose-6-phosphate, or alpha-D-galactose-1-phosphate. The sequence is that of NADP(+)-dependent glycerol-3-phosphate dehydrogenase from Archaeoglobus fulgidus (strain ATCC 49558 / DSM 4304 / JCM 9628 / NBRC 100126 / VC-16).